The sequence spans 463 residues: Glutamate--tRNA ligase (463 aa).

The short motif at 8–18 (PSPTGYLHIGG) is the 'HIGH' region element. Positions 236 to 240 (RLSKR) match the 'KMSKS' region motif. Lys239 provides a ligand contact to ATP.

This sequence belongs to the class-I aminoacyl-tRNA synthetase family. Glutamate--tRNA ligase type 1 subfamily. As to quaternary structure, monomer.

It localises to the cytoplasm. The catalysed reaction is tRNA(Glu) + L-glutamate + ATP = L-glutamyl-tRNA(Glu) + AMP + diphosphate. Its function is as follows. Catalyzes the attachment of glutamate to tRNA(Glu) in a two-step reaction: glutamate is first activated by ATP to form Glu-AMP and then transferred to the acceptor end of tRNA(Glu). The sequence is that of Glutamate--tRNA ligase from Nitrosomonas eutropha (strain DSM 101675 / C91 / Nm57).